The primary structure comprises 352 residues: Uroporphyrinogen decarboxylase (352 aa).

Substrate contacts are provided by residues Arg26–Arg30, Phe45, Asp76, Tyr153, Ser208, and His323.

It belongs to the uroporphyrinogen decarboxylase family. Homodimer.

It localises to the cytoplasm. The enzyme catalyses uroporphyrinogen III + 4 H(+) = coproporphyrinogen III + 4 CO2. Its pathway is porphyrin-containing compound metabolism; protoporphyrin-IX biosynthesis; coproporphyrinogen-III from 5-aminolevulinate: step 4/4. In terms of biological role, catalyzes the decarboxylation of four acetate groups of uroporphyrinogen-III to yield coproporphyrinogen-III. The sequence is that of Uroporphyrinogen decarboxylase from Parasynechococcus marenigrum (strain WH8102).